Reading from the N-terminus, the 340-residue chain is Phenylalanine--tRNA ligase alpha subunit (340 aa).

Glu254 is a Mg(2+) binding site.

The protein belongs to the class-II aminoacyl-tRNA synthetase family. Phe-tRNA synthetase alpha subunit type 1 subfamily. In terms of assembly, tetramer of two alpha and two beta subunits. It depends on Mg(2+) as a cofactor.

Its subcellular location is the cytoplasm. The enzyme catalyses tRNA(Phe) + L-phenylalanine + ATP = L-phenylalanyl-tRNA(Phe) + AMP + diphosphate + H(+). In Chloroherpeton thalassium (strain ATCC 35110 / GB-78), this protein is Phenylalanine--tRNA ligase alpha subunit.